The chain runs to 641 residues: Lipase (641 aa).

An N-terminal signal peptide occupies residues 1 to 38; the sequence is MKETKHQHTFSIRKSAYGAASVMVASCIFVIGGGVAEA. 2 disordered regions span residues 41–174 and 206–246; these read STTQ…PSVD and TVSP…KPTV. The segment covering 53–64 has biased composition (low complexity); that stretch reads QTSQQETHTHQT. A compositionally biased stretch (basic and acidic residues) spans 73 to 94; sequence TPEHVDDSKEATPLPEKAESPK. 2 stretches are compositionally biased toward polar residues: residues 95-106 and 127-139; these read TEVTVQPSSHTQ and PEST…VESN. Over residues 140–165 the composition is skewed to basic and acidic residues; that stretch reads KATENEMSPVEHHASNVEKREDRLET. The segment covering 227–239 has biased composition (polar residues); it reads ENTTAQNKFTSQA. Ser369 acts as the Nucleophile in catalysis. Residue Gly535 participates in Ca(2+) binding. Asp559 serves as the catalytic Charge relay system. Residue Asp599 participates in Ca(2+) binding. His600 (charge relay system) is an active-site residue. Ca(2+) contacts are provided by Asp602, Asp607, and Asp610.

The protein belongs to the AB hydrolase superfamily. Lipase family. Ca(2+) is required as a cofactor.

The protein localises to the secreted. The catalysed reaction is a triacylglycerol + H2O = a diacylglycerol + a fatty acid + H(+). The enzyme catalyses a 1,2-diacyl-sn-glycero-3-phosphocholine + H2O = a 2-acyl-sn-glycero-3-phosphocholine + a fatty acid + H(+). Its function is as follows. Has a broad substrate specificity hydrolyzing a variety of triglycerides and phosphatidylcholines. This chain is Lipase (lip), found in Staphylococcus hyicus.